The chain runs to 186 residues: Tumor necrosis factor alpha-induced protein 8-like protein 1 (186 aa).

It belongs to the TNFAIP8 family. In terms of assembly, interacts with FBXW5; TNFAIP8L1 competes with TSC2 to bind FBXW5 increasing TSC2 stability by preventing its ubiquitination. In terms of tissue distribution, high expression detected in most carcinoma cell lines, especially in cells transformed with virus genomes.

It is found in the cytoplasm. Acts as a negative regulator of mTOR activity. This is Tumor necrosis factor alpha-induced protein 8-like protein 1 (TNFAIP8L1) from Homo sapiens (Human).